The primary structure comprises 551 residues: Cytochrome P450 monooxygenase sdnQ (551 aa).

The interval 1 to 23 is disordered; the sequence is MDDPSIASGFQQGTGRTTGANGT. A compositionally biased stretch (polar residues) spans 8–23; sequence SGFQQGTGRTTGANGT. Residue Asn21 is glycosylated (N-linked (GlcNAc...) asparagine). The helical transmembrane segment at 41–57 threads the bilayer; sequence CIGTSLLVALLTTIIIY. Cys491 lines the heme pocket.

Belongs to the cytochrome P450 family. Requires heme as cofactor.

The protein localises to the membrane. Its pathway is antibiotic biosynthesis. Its function is as follows. Cytochrome P450 monooxygenase; part of the gene cluster that mediates the biosynthesis of sordarin and hypoxysordarin, glycoside antibiotics with a unique tetracyclic diterpene aglycone structure. First, the geranylgeranyl diphosphate synthase sdnC constructs GGDP from farnesyl diphosphate and isopentenyl diphosphate. The diterpene cyclase sdnA then catalyzes the cyclization of GGDP to afford cycloaraneosene. Cycloaraneosene is then hydroxylated four times by the putative cytochrome P450 monooxygenases sdnB, sdnE, sdnF and sdnH to give a hydroxylated cycloaraneosene derivative such as cycloaraneosene-8,9,13,19-tetraol. Although the order of the hydroxylations is unclear, at least C8, C9 and C13 of the cycloaraneosene skeleton are hydroxylated before the sordaricin formation. Dehydration of the 13-hydroxy group of the hydroxylated cycloaraneosene derivative might be catalyzed by an unassigned hypothetical protein such as sdnG and sdnP to construct the cyclopentadiene moiety. The FAD-dependent oxidoreductase sdnN is proposed to catalyze the oxidation at C9 of the hydroxylated cycloaraneosene derivative and also catalyze the Baeyer-Villiger oxidation to give the lactone intermediate. The presumed lactone intermediate would be hydrolyzed to give an acrolein moiety and a carboxylate moiety. Then, [4+2]cycloaddition would occur between the acrolein moiety and the cyclopentadiene moiety to give sordaricin. SdnN might also be involved in the [4+2]cycloaddition after the hypothesized oxidation to accommodate the oxidized product and prompt the [4+2]cycloaddition. GDP-6-deoxy-D-altrose may be biosynthesized from GDP-D-mannose by the putative GDP-mannose-4,6-dehydratase sdnI and the short-chain dehydrogenase sdnK. The glycosyltransferase sdnJ catalyzes the attachment of 6-deoxy-D-altrose onto the 19-hydroxy group of sordaricin to give 4'-O-demethylsordarin. The methyltransferase sdnD would complete the biosynthesis of sordarin. Sordarin can be further modified into hypoxysordarin. The unique acyl chain at the 3'-hydroxy group of hypoxysordarin would be constructed by an iterative type I PKS sdnO and the trans-acting polyketide methyltransferase sdnL. SdnL would be responsible for the introduction of an alpha-methyl group of the polyketide chain. Alternatively, the beta-lactamase-like protein sdnR might be responsible for the cleavage and transfer of the polyketide chain from the PKS sdnO to sordarin. Two putative cytochrome P450 monooxygenases, sdnQ and sdnT, might catalyze the epoxidations of the polyketide chain to complete the biosynthesis of hypoxysordarin. Transcriptional regulators sdnM and sdnS are presumably encoded for the transcriptional regulation of the expression of the sdn gene cluster. This Sordaria araneosa (Pleurage araneosa) protein is Cytochrome P450 monooxygenase sdnQ.